Consider the following 134-residue polypeptide: Small ribosomal subunit protein bS16 (134 aa).

A disordered region spans residues 79–134; that stretch reads AGIAKRPSRNNPTKGEPGKKAQERLALAKQAEEEAAAKAAEAAAAAAAPAEEAASE. Residues 115 to 134 are compositionally biased toward low complexity; the sequence is AKAAEAAAAAAAPAEEAASE.

This sequence belongs to the bacterial ribosomal protein bS16 family.

In Brucella suis (strain ATCC 23445 / NCTC 10510), this protein is Small ribosomal subunit protein bS16.